An 844-amino-acid chain; its full sequence is Probable serine/threonine-protein kinase DDB_G0267566 (844 aa).

ANK repeat units follow at residues 335–367 (KGDT…NANI) and 371–400 (KHKV…KPFL). The Protein kinase domain occupies 508–773 (SELGKLIGKG…FEVFQKLKKV (266 aa)). Residues 514 to 522 (IGKGANGKV) and K539 each bind ATP. The Proton acceptor role is filled by D634.

The protein belongs to the protein kinase superfamily. Ser/Thr protein kinase family.

The enzyme catalyses L-seryl-[protein] + ATP = O-phospho-L-seryl-[protein] + ADP + H(+). The catalysed reaction is L-threonyl-[protein] + ATP = O-phospho-L-threonyl-[protein] + ADP + H(+). This Dictyostelium discoideum (Social amoeba) protein is Probable serine/threonine-protein kinase DDB_G0267566.